Reading from the N-terminus, the 133-residue chain is Small ribosomal subunit protein uS8 (133 aa).

It belongs to the universal ribosomal protein uS8 family. In terms of assembly, part of the 30S ribosomal subunit. Contacts proteins S5 and S12.

Its function is as follows. One of the primary rRNA binding proteins, it binds directly to 16S rRNA central domain where it helps coordinate assembly of the platform of the 30S subunit. The protein is Small ribosomal subunit protein uS8 of Amoebophilus asiaticus (strain 5a2).